A 460-amino-acid polypeptide reads, in one-letter code: Light-independent protochlorophyllide reductase subunit N (460 aa).

[4Fe-4S] cluster contacts are provided by Cys20, Cys45, and Cys105.

The protein belongs to the BchN/ChlN family. As to quaternary structure, protochlorophyllide reductase is composed of three subunits; ChlL, ChlN and ChlB. Forms a heterotetramer of two ChlB and two ChlN subunits. It depends on [4Fe-4S] cluster as a cofactor.

It localises to the plastid. Its subcellular location is the chloroplast. The enzyme catalyses chlorophyllide a + oxidized 2[4Fe-4S]-[ferredoxin] + 2 ADP + 2 phosphate = protochlorophyllide a + reduced 2[4Fe-4S]-[ferredoxin] + 2 ATP + 2 H2O. It participates in porphyrin-containing compound metabolism; chlorophyll biosynthesis (light-independent). Component of the dark-operative protochlorophyllide reductase (DPOR) that uses Mg-ATP and reduced ferredoxin to reduce ring D of protochlorophyllide (Pchlide) to form chlorophyllide a (Chlide). This reaction is light-independent. The NB-protein (ChlN-ChlB) is the catalytic component of the complex. In Adiantum capillus-veneris (Maidenhair fern), this protein is Light-independent protochlorophyllide reductase subunit N.